Consider the following 336-residue polypeptide: MRAAVVTKDHKVSIEDKKLRALKPGEALVQTEYCGVCHTDLHVKNADFGDVTGVTLGHEGIGKVIEVAEDVESLKIGDRVSIAWMFESCGRCEYCTTGRETLCRSVKNAGYTVDGAMAEQVIVTADYAVKVPEKLDPAAASSITCAGVTTYKAVKVSNVKPGQWLGVFGIGGLGNLALQYAKNVMGAKIVAFDINDDKLAFAKELGADAIINSKDVDPVAEVMKLTDNKGLDATVVTSVAKTPFNQAVDVVKAGARVVAVGLPVDKMNLDIPRLVLDGIEVVGSLVGTRQDLREAFEFAAENKVTPKVQLRKLEEINDIFEEMENGTITGRMVIKF.

7 residues coordinate Zn(2+): C37, H58, C89, C92, C95, C103, and C145.

It belongs to the zinc-containing alcohol dehydrogenase family. Zn(2+) serves as cofactor.

The enzyme catalyses a primary alcohol + NAD(+) = an aldehyde + NADH + H(+). The catalysed reaction is a secondary alcohol + NAD(+) = a ketone + NADH + H(+). The chain is Alcohol dehydrogenase (adh) from Staphylococcus aureus (strain USA300).